A 309-amino-acid polypeptide reads, in one-letter code: NAD kinase (309 aa).

D89 (proton acceptor) is an active-site residue. Residues D89–G90, N163–E164, H174, R191, D193, and T204–S209 each bind NAD(+).

The protein belongs to the NAD kinase family. Requires a divalent metal cation as cofactor.

The protein resides in the cytoplasm. It carries out the reaction NAD(+) + ATP = ADP + NADP(+) + H(+). Functionally, involved in the regulation of the intracellular balance of NAD and NADP, and is a key enzyme in the biosynthesis of NADP. Catalyzes specifically the phosphorylation on 2'-hydroxyl of the adenosine moiety of NAD to yield NADP. The sequence is that of NAD kinase from Shewanella denitrificans (strain OS217 / ATCC BAA-1090 / DSM 15013).